Reading from the N-terminus, the 103-residue chain is Large ribosomal subunit protein bL21 (103 aa).

The protein belongs to the bacterial ribosomal protein bL21 family. Part of the 50S ribosomal subunit. Contacts protein L20.

Functionally, this protein binds to 23S rRNA in the presence of protein L20. In Paraburkholderia phymatum (strain DSM 17167 / CIP 108236 / LMG 21445 / STM815) (Burkholderia phymatum), this protein is Large ribosomal subunit protein bL21.